The chain runs to 143 residues: Hemoglobin subunit alpha-1 (143 aa).

S2 is modified (N-acetylserine). Residues 2–143 (SLSSKDKATV…LALALAEKYR (142 aa)) form the Globin domain. H60 is an O2 binding site. H89 is a binding site for heme b.

It belongs to the globin family. In terms of assembly, hb 1 is a heterotetramer of two alpha-1 and two beta-1 chains. Red blood cells.

Functionally, involved in oxygen transport from gills to the various peripheral tissues. This chain is Hemoglobin subunit alpha-1 (hba1), found in Arctogadus glacialis (Arctic cod).